A 186-amino-acid chain; its full sequence is Protein GrpE (186 aa).

Residues 1–13 (MSENTQPEQNQPL) are compositionally biased toward polar residues. Positions 1-22 (MSENTQPEQNQPLTGAPSPEEL) are disordered.

This sequence belongs to the GrpE family. As to quaternary structure, homodimer.

Its subcellular location is the cytoplasm. Participates actively in the response to hyperosmotic and heat shock by preventing the aggregation of stress-denatured proteins, in association with DnaK and GrpE. It is the nucleotide exchange factor for DnaK and may function as a thermosensor. Unfolded proteins bind initially to DnaJ; upon interaction with the DnaJ-bound protein, DnaK hydrolyzes its bound ATP, resulting in the formation of a stable complex. GrpE releases ADP from DnaK; ATP binding to DnaK triggers the release of the substrate protein, thus completing the reaction cycle. Several rounds of ATP-dependent interactions between DnaJ, DnaK and GrpE are required for fully efficient folding. This is Protein GrpE from Polaromonas sp. (strain JS666 / ATCC BAA-500).